We begin with the raw amino-acid sequence, 262 residues long: Small ribosomal subunit protein uS2 (262 aa).

The interval 228 to 262 (VSNEEVAAEQNINLDDKEESEQAETTEENTSVESN) is disordered. Positions 243-254 (DKEESEQAETTE) are enriched in acidic residues.

It belongs to the universal ribosomal protein uS2 family.

In Staphylococcus epidermidis (strain ATCC 35984 / DSM 28319 / BCRC 17069 / CCUG 31568 / BM 3577 / RP62A), this protein is Small ribosomal subunit protein uS2.